The following is a 53-amino-acid chain: uncharacterized protein (53 aa).

The protein resides in the mitochondrion matrix. It is found in the kinetoplast. This is an uncharacterized protein from Trypanosoma brucei brucei.